The following is a 183-amino-acid chain: Peptidyl-tRNA hydrolase (183 aa).

Position 14 (Tyr14) interacts with tRNA. His19 functions as the Proton acceptor in the catalytic mechanism. Phe64 and Asn66 together coordinate tRNA.

This sequence belongs to the PTH family. Monomer.

Its subcellular location is the cytoplasm. It carries out the reaction an N-acyl-L-alpha-aminoacyl-tRNA + H2O = an N-acyl-L-amino acid + a tRNA + H(+). Its function is as follows. Hydrolyzes ribosome-free peptidyl-tRNAs (with 1 or more amino acids incorporated), which drop off the ribosome during protein synthesis, or as a result of ribosome stalling. Catalyzes the release of premature peptidyl moieties from peptidyl-tRNA molecules trapped in stalled 50S ribosomal subunits, and thus maintains levels of free tRNAs and 50S ribosomes. This chain is Peptidyl-tRNA hydrolase, found in Syntrophomonas wolfei subsp. wolfei (strain DSM 2245B / Goettingen).